The primary structure comprises 431 residues: Glutamyl-tRNA(Gln) amidotransferase subunit A (431 aa).

Catalysis depends on charge relay system residues Lys-55 and Ser-130. The Acyl-ester intermediate role is filled by Ser-154.

This sequence belongs to the amidase family. GatA subfamily. As to quaternary structure, heterotrimer of A, B and C subunits.

The enzyme catalyses L-glutamyl-tRNA(Gln) + L-glutamine + ATP + H2O = L-glutaminyl-tRNA(Gln) + L-glutamate + ADP + phosphate + H(+). Functionally, allows the formation of correctly charged Gln-tRNA(Gln) through the transamidation of misacylated Glu-tRNA(Gln) in organisms which lack glutaminyl-tRNA synthetase. The reaction takes place in the presence of glutamine and ATP through an activated gamma-phospho-Glu-tRNA(Gln). The protein is Glutamyl-tRNA(Gln) amidotransferase subunit A of Methanococcus maripaludis (strain DSM 14266 / JCM 13030 / NBRC 101832 / S2 / LL).